Reading from the N-terminus, the 736-residue chain is Phosphoribosylformylglycinamidine synthase subunit PurL (736 aa).

The active site involves H50. Residues Y53 and K92 each contribute to the ATP site. E94 serves as a coordination point for Mg(2+). Residues 95 to 98 (SHNH) and R117 contribute to the substrate site. Catalysis depends on H96, which acts as the Proton acceptor. D118 serves as a coordination point for Mg(2+). Q241 lines the substrate pocket. D269 is a binding site for Mg(2+). 313 to 315 (ESQ) is a binding site for substrate. D495 and G532 together coordinate ATP. Mg(2+) is bound at residue N533. S535 is a binding site for substrate.

This sequence belongs to the FGAMS family. Monomer. Part of the FGAM synthase complex composed of 1 PurL, 1 PurQ and 2 PurS subunits.

It is found in the cytoplasm. It carries out the reaction N(2)-formyl-N(1)-(5-phospho-beta-D-ribosyl)glycinamide + L-glutamine + ATP + H2O = 2-formamido-N(1)-(5-O-phospho-beta-D-ribosyl)acetamidine + L-glutamate + ADP + phosphate + H(+). Its pathway is purine metabolism; IMP biosynthesis via de novo pathway; 5-amino-1-(5-phospho-D-ribosyl)imidazole from N(2)-formyl-N(1)-(5-phospho-D-ribosyl)glycinamide: step 1/2. Functionally, part of the phosphoribosylformylglycinamidine synthase complex involved in the purines biosynthetic pathway. Catalyzes the ATP-dependent conversion of formylglycinamide ribonucleotide (FGAR) and glutamine to yield formylglycinamidine ribonucleotide (FGAM) and glutamate. The FGAM synthase complex is composed of three subunits. PurQ produces an ammonia molecule by converting glutamine to glutamate. PurL transfers the ammonia molecule to FGAR to form FGAM in an ATP-dependent manner. PurS interacts with PurQ and PurL and is thought to assist in the transfer of the ammonia molecule from PurQ to PurL. The sequence is that of Phosphoribosylformylglycinamidine synthase subunit PurL from Bartonella quintana (strain Toulouse) (Rochalimaea quintana).